A 431-amino-acid polypeptide reads, in one-letter code: UDP-N-acetylmuramate--L-alanine ligase (431 aa).

G108–S114 serves as a coordination point for ATP.

It belongs to the MurCDEF family.

The protein localises to the cytoplasm. It catalyses the reaction UDP-N-acetyl-alpha-D-muramate + L-alanine + ATP = UDP-N-acetyl-alpha-D-muramoyl-L-alanine + ADP + phosphate + H(+). It functions in the pathway cell wall biogenesis; peptidoglycan biosynthesis. Cell wall formation. The protein is UDP-N-acetylmuramate--L-alanine ligase of Exiguobacterium sibiricum (strain DSM 17290 / CCUG 55495 / CIP 109462 / JCM 13490 / 255-15).